The chain runs to 143 residues: Transcriptional regulatory protein RosR (143 aa).

The segment at 79-97 adopts a C2H3-type zinc-finger fold; it reads CLECGGNFKSLKRHLMTHH.

Belongs to the ros/MucR family.

In Rhizobium etli (strain ATCC 51251 / DSM 11541 / JCM 21823 / NBRC 15573 / CFN 42), this protein is Transcriptional regulatory protein RosR (rosR).